A 726-amino-acid polypeptide reads, in one-letter code: Dipeptidyl-peptidase 5 (726 aa).

Positions 1–19 (MAPAKWLIASLAFASTGLA) are cleaved as a signal peptide. Residues asparagine 96 and asparagine 252 are each glycosylated (N-linked (GlcNAc...) asparagine). The segment at 268–292 (VAEPINKRNGPRTPHGIEGASSSPV) is disordered. A glycan (N-linked (GlcNAc...) asparagine) is linked at asparagine 485. Residue serine 558 is the Charge relay system of the active site. Asparagine 605 is a glycosylation site (N-linked (GlcNAc...) asparagine). Active-site charge relay system residues include aspartate 641 and histidine 673. The N-linked (GlcNAc...) asparagine glycan is linked to asparagine 699.

Belongs to the peptidase S9C family.

It localises to the secreted. In terms of biological role, extracellular dipeptidyl-peptidase which removes N-terminal dipeptides sequentially from polypeptides having unsubstituted N-termini. Contributes to pathogenicity. In Arthroderma otae (strain ATCC MYA-4605 / CBS 113480) (Microsporum canis), this protein is Dipeptidyl-peptidase 5 (DPP5).